A 223-amino-acid chain; its full sequence is Large ribosomal subunit protein bL25 (223 aa).

Residues 198–223 form a disordered region; that stretch reads EEIGDRPRSAEEGAAPVKERKLRESE.

The protein belongs to the bacterial ribosomal protein bL25 family. CTC subfamily. As to quaternary structure, part of the 50S ribosomal subunit; part of the 5S rRNA/L5/L18/L25 subcomplex. Contacts the 5S rRNA. Binds to the 5S rRNA independently of L5 and L18.

Functionally, this is one of the proteins that binds to the 5S RNA in the ribosome where it forms part of the central protuberance. The chain is Large ribosomal subunit protein bL25 from Thermomicrobium roseum (strain ATCC 27502 / DSM 5159 / P-2).